Consider the following 1075-residue polypeptide: DNA-directed RNA polymerase subunit beta (1075 aa).

The protein belongs to the RNA polymerase beta chain family. In terms of assembly, in plastids the minimal PEP RNA polymerase catalytic core is composed of four subunits: alpha, beta, beta', and beta''. When a (nuclear-encoded) sigma factor is associated with the core the holoenzyme is formed, which can initiate transcription.

It is found in the plastid. The protein localises to the chloroplast. It carries out the reaction RNA(n) + a ribonucleoside 5'-triphosphate = RNA(n+1) + diphosphate. Functionally, DNA-dependent RNA polymerase catalyzes the transcription of DNA into RNA using the four ribonucleoside triphosphates as substrates. The sequence is that of DNA-directed RNA polymerase subunit beta from Oryza sativa (Rice).